Consider the following 921-residue polypeptide: Ubiquitin carboxyl-terminal hydrolase 11 (921 aa).

A compositionally biased stretch (low complexity) spans Met1–Ser16. Residues Met1–Asp29 are disordered. Residues Pro28–Ile133 enclose the DUSP domain. Residue Lys194 is modified to N6-acetyllysine. Positions Cys257–Gln889 constitute a USP domain. The active-site Nucleophile is the Cys266. Residues Thr592–Gln697 form a disordered region. At Ser596 the chain carries Phosphoserine. The span at Asp597–Glu624 shows a compositional bias: acidic residues. 2 stretches are compositionally biased toward polar residues: residues Leu657–Trp666 and Phe676–Gln697. Ser692 is subject to Phosphoserine. Residue His847 is the Proton acceptor of the active site. A disordered region spans residues Arg893–Asn921. The segment covering Gln895–Ser915 has biased composition (low complexity). Ser906 is modified (phosphoserine).

It belongs to the peptidase C19 family. As to quaternary structure, monomer. Associated component of the Polycomb group (PcG) multiprotein PRC1-like complex. Interacts with RANBP9/RANBPM. Interacts with BRCA2. Interacts with CHUK/IKKA. Interacts with NFKBIA. Interacts with SPRY3, RAE1, MYCBP2/PAM, and KCTD6.

Its subcellular location is the nucleus. It localises to the cytoplasm. The protein resides in the chromosome. The enzyme catalyses Thiol-dependent hydrolysis of ester, thioester, amide, peptide and isopeptide bonds formed by the C-terminal Gly of ubiquitin (a 76-residue protein attached to proteins as an intracellular targeting signal).. Functionally, protease that can remove conjugated ubiquitin from target proteins and polyubiquitin chains. Inhibits the degradation of target proteins by the proteasome. Cleaves preferentially 'Lys-6' and 'Lys-63'-linked ubiquitin chains. Has lower activity with 'Lys-11' and 'Lys-33'-linked ubiquitin chains, and extremely low activity with 'Lys-27', 'Lys-29' and 'Lys-48'-linked ubiquitin chains (in vitro). Plays a role in the regulation of pathways leading to NF-kappa-B activation. Plays a role in the regulation of DNA repair after double-stranded DNA breaks. Acts as a chromatin regulator via its association with the Polycomb group (PcG) multiprotein PRC1-like complex; may act by deubiquitinating components of the PRC1-like comple. Promotes cell proliferation by deubiquitinating phosphorylated E2F1x. This is Ubiquitin carboxyl-terminal hydrolase 11 from Rattus norvegicus (Rat).